Reading from the N-terminus, the 940-residue chain is Gamma-aminobutyric acid type B receptor subunit 2 (940 aa).

The signal sequence occupies residues 1–40; it reads MASPPSSGQPRPPPPPPPPARLLLPLLLSLLLSLAPGAWG. Residues 41–482 lie on the Extracellular side of the membrane; the sequence is WARGAPRPPP…LRKISLPLYS (442 aa). An N-linked (GlcNAc...) asparagine glycan is attached at asparagine 89. 3 disulfides stabilise this stretch: cysteine 107-cysteine 134, cysteine 236-cysteine 265, and cysteine 264-cysteine 301. Residues asparagine 297, asparagine 388, asparagine 403, and asparagine 452 are each glycosylated (N-linked (GlcNAc...) asparagine). The chain crosses the membrane as a helical span at residues 483–503; that stretch reads ILSALTILGMIMASAFLFFNI. At 504-521 the chain is on the cytoplasmic side; it reads KNRNQKLIKMSSPYMNNL. A helical membrane pass occupies residues 522–542; sequence IILGGMLSYASIFLFGLDGSF. Over 543-550 the chain is Extracellular; that stretch reads VSEKTFET. A helical transmembrane segment spans residues 551–571; that stretch reads LCTVRTWILTVGYTTAFGAMF. The Cytoplasmic segment spans residues 572-596; that stretch reads AKTWRVHAIFKNVKMKKKIIKDQKL. A helical membrane pass occupies residues 597–617; it reads LVIVGGMLLIDLCILICWQAV. Over 618–653 the chain is Extracellular; the sequence is DPLRRTVERYSMEPDPAGRDISIRPLLEHCENTHMT. The chain crosses the membrane as a helical span at residues 654-674; sequence IWLGIVYAYKGLLMLFGCFLA. Over 675–690 the chain is Cytoplasmic; the sequence is WETRNVSIPALNDSKY. A helical transmembrane segment spans residues 691 to 711; sequence IGMSVYNVGIMCIIGAAVSFL. Over 712 to 719 the chain is Extracellular; that stretch reads TRDQPNVQ. A helical membrane pass occupies residues 720 to 740; it reads FCIVALVIIFCSTITLCLVFV. Over 741 to 940 the chain is Cytoplasmic; that stretch reads PKLITLRTNP…PSFRVMVSGL (200 aa). Residues 762 to 789 are disordered; the sequence is TQNQKKEDSKTSTSVTSVNQASTSRLEG. Residues 772 to 786 show a composition bias toward polar residues; sequence TSTSVTSVNQASTSR. Serine 775 and serine 778 each carry phosphoserine. Positions 781 to 818 form a coiled coil; that stretch reads QASTSRLEGLQSENHRLRMKITELDKDLEEVTMQLQDT. Residue threonine 818 is modified to Phosphothreonine. Residues serine 883, serine 892, serine 912, serine 915, serine 919, and serine 923 each carry the phosphoserine modification.

It belongs to the G-protein coupled receptor 3 family. GABA-B receptor subfamily. Heterodimer of GABBR1 and GABBR2. Homodimers may form, but are inactive. Interacts (via C-terminus) with ATF4 (via leucine zipper domain).

The protein localises to the cell membrane. It localises to the postsynaptic cell membrane. In terms of biological role, component of a heterodimeric G-protein coupled receptor for GABA, formed by GABBR1 and GABBR2. Within the heterodimeric GABA receptor, only GABBR1 seems to bind agonists, while GABBR2 mediates coupling to G proteins. Ligand binding causes a conformation change that triggers signaling via guanine nucleotide-binding proteins (G proteins) and modulates the activity of down-stream effectors, such as adenylate cyclase. Signaling inhibits adenylate cyclase, stimulates phospholipase A2, activates potassium channels, inactivates voltage-dependent calcium-channels and modulates inositol phospholipid hydrolysis. Plays a critical role in the fine-tuning of inhibitory synaptic transmission. Pre-synaptic GABA receptor inhibits neurotransmitter release by down-regulating high-voltage activated calcium channels, whereas postsynaptic GABA receptor decreases neuronal excitability by activating a prominent inwardly rectifying potassium (Kir) conductance that underlies the late inhibitory postsynaptic potentials. Not only implicated in synaptic inhibition but also in hippocampal long-term potentiation, slow wave sleep, muscle relaxation and antinociception. Interacts with KCTD8, KCTD12 and KCTD16; this interaction determines the pharmacology and kinetics of the receptor response, the KCTD proteins markedly accelerating the GABA-B response, although to different extents. The sequence is that of Gamma-aminobutyric acid type B receptor subunit 2 (Gabbr2) from Mus musculus (Mouse).